Consider the following 148-residue polypeptide: 3-dehydroquinate dehydratase (148 aa).

Tyr24 acts as the Proton acceptor in catalysis. Positions 80, 86, and 93 each coordinate substrate. Catalysis depends on His106, which acts as the Proton donor. Substrate-binding positions include 107–108 and Arg117; that span reads IS.

It belongs to the type-II 3-dehydroquinase family. In terms of assembly, homododecamer.

The catalysed reaction is 3-dehydroquinate = 3-dehydroshikimate + H2O. The protein operates within metabolic intermediate biosynthesis; chorismate biosynthesis; chorismate from D-erythrose 4-phosphate and phosphoenolpyruvate: step 3/7. Functionally, catalyzes a trans-dehydration via an enolate intermediate. This is 3-dehydroquinate dehydratase from Acidovorax sp. (strain JS42).